A 526-amino-acid polypeptide reads, in one-letter code: METTFRSALVKNFLGQSPDWYKLAILVFLVVNPLVFFLVDPFIAGWLLVVEFIFTLAMALKCYPLLPGGLLAIESVLIGMTSPDRVGEEIAHNLEVLLLLIFMVAGIYFMKQLLLFVFTKLLLNIRSKMLLSLAFCFAAALLSAFLDALTVVAVVISVATGFYSIYHNVASNRSDGNDGNIDVGDDSTLVSDDHKQTLEQFRAFLRSLLMHAGVGTALGGVMTMVGEPQNLIIAKSAGWGFVDFFLRMAPVTLPVFACGLLVCLLLERFGVFGYGAKLPERVREVLTEFDRQATAGRSKQEQVRLVVQALIGIWLVVALAFHLAEVGLIGLSVIILATSLCGVTDEHAIGKAFQEALPFTALLTVFFTVVAVIIEQHLFTPIIHFVLQAQPSSQLALFYLFNGLLSSVSDNVFVGTVYINEARAAFENGVISLKQFEMLAVAINTGTNLPSVATPNGQAAFLFLLTSALAPLVRLSYGRMVWMALPYTVVLTLVGLLCVQFTLAPATELLTQWHWLTLPSIEAATH.

10 helical membrane-spanning segments follow: residues F13 to P33, L98 to F118, L133 to V155, L208 to P228, F244 to L264, A309 to I329, E355 to E375, L395 to G415, V452 to L472, and V481 to F501.

The protein belongs to the NhaB Na(+)/H(+) (TC 2.A.34) antiporter family.

The protein resides in the cell inner membrane. It carries out the reaction 2 Na(+)(in) + 3 H(+)(out) = 2 Na(+)(out) + 3 H(+)(in). In terms of biological role, na(+)/H(+) antiporter that extrudes sodium in exchange for external protons. The sequence is that of Na(+)/H(+) antiporter NhaB from Serratia proteamaculans (strain 568).